Consider the following 660-residue polypeptide: GRIP and coiled-coil domain-containing protein 2 (660 aa).

The interval 1–28 is disordered; that stretch reads MSAPESSISPVPPPGSSSGGGKKLDSLP. Coiled-coil stretches lie at residues 30 to 92, 115 to 464, and 517 to 596; these read EDLV…VENN, EWKE…KAIA, and DEYR…EYLK. The GRIP domain occupies 585–636; sequence ELSNEKNMEYLKNVFVQFLKPESVPAERDQLVIVLQRVLHLSPKEVEILKAA.

This is GRIP and coiled-coil domain-containing protein 2 from Caenorhabditis elegans.